The sequence spans 298 residues: Single myb histone 2 (298 aa).

The HTH myb-type domain occupies 1–61; sequence MGVPKQRWTP…KWRNLSVTAG (61 aa). Positions 28–57 form a DNA-binding region, H-T-H motif; sequence WRTILRDSDFSALLRLRSNVDLKDKWRNLS. The region spanning 124 to 192 is the H15 domain; the sequence is SVARLDDLIV…KVNQKYRIAP (69 aa). Residues 237–278 adopt a coiled-coil conformation; the sequence is EEAAAFAAKAVAEAEVAMAEAEEAARVAEAAENDAEAAKAFL.

It belongs to the histone H1/H5 family. SMH subfamily. In terms of assembly, forms a homodimer and heterodimers.

Its subcellular location is the nucleus. The protein localises to the chromosome. It localises to the nucleolus. The protein resides in the telomere. Its function is as follows. Binds preferentially double-stranded telomeric repeats, but may also bind to the single telomeric strand. This Zea mays (Maize) protein is Single myb histone 2 (SMH2).